The following is a 147-amino-acid chain: Large ribosomal subunit protein uL13 (147 aa).

This sequence belongs to the universal ribosomal protein uL13 family. Part of the 50S ribosomal subunit.

In terms of biological role, this protein is one of the early assembly proteins of the 50S ribosomal subunit, although it is not seen to bind rRNA by itself. It is important during the early stages of 50S assembly. The protein is Large ribosomal subunit protein uL13 of Kineococcus radiotolerans (strain ATCC BAA-149 / DSM 14245 / SRS30216).